A 513-amino-acid chain; its full sequence is ATP synthase subunit alpha (513 aa).

169-176 (GDRQIGKT) serves as a coordination point for ATP.

It belongs to the ATPase alpha/beta chains family. F-type ATPases have 2 components, CF(1) - the catalytic core - and CF(0) - the membrane proton channel. CF(1) has five subunits: alpha(3), beta(3), gamma(1), delta(1), epsilon(1). CF(0) has three main subunits: a(1), b(2) and c(9-12). The alpha and beta chains form an alternating ring which encloses part of the gamma chain. CF(1) is attached to CF(0) by a central stalk formed by the gamma and epsilon chains, while a peripheral stalk is formed by the delta and b chains.

It is found in the cell inner membrane. It carries out the reaction ATP + H2O + 4 H(+)(in) = ADP + phosphate + 5 H(+)(out). Its function is as follows. Produces ATP from ADP in the presence of a proton gradient across the membrane. The alpha chain is a regulatory subunit. The chain is ATP synthase subunit alpha from Shewanella halifaxensis (strain HAW-EB4).